A 246-amino-acid chain; its full sequence is Pyridoxine 5'-phosphate synthase (246 aa).

Asn12 lines the 3-amino-2-oxopropyl phosphate pocket. 14–15 contacts 1-deoxy-D-xylulose 5-phosphate; it reads DH. Arg23 contacts 3-amino-2-oxopropyl phosphate. His48 functions as the Proton acceptor in the catalytic mechanism. The 1-deoxy-D-xylulose 5-phosphate site is built by Arg50 and His55. Residue Glu75 is the Proton acceptor of the active site. Residue Thr105 coordinates 1-deoxy-D-xylulose 5-phosphate. Catalysis depends on His196, which acts as the Proton donor. Residues Gly197 and 218–219 contribute to the 3-amino-2-oxopropyl phosphate site; that span reads GH.

The protein belongs to the PNP synthase family. Homooctamer; tetramer of dimers.

The protein resides in the cytoplasm. It catalyses the reaction 3-amino-2-oxopropyl phosphate + 1-deoxy-D-xylulose 5-phosphate = pyridoxine 5'-phosphate + phosphate + 2 H2O + H(+). The protein operates within cofactor biosynthesis; pyridoxine 5'-phosphate biosynthesis; pyridoxine 5'-phosphate from D-erythrose 4-phosphate: step 5/5. Functionally, catalyzes the complicated ring closure reaction between the two acyclic compounds 1-deoxy-D-xylulose-5-phosphate (DXP) and 3-amino-2-oxopropyl phosphate (1-amino-acetone-3-phosphate or AAP) to form pyridoxine 5'-phosphate (PNP) and inorganic phosphate. This Pseudomonas putida (strain W619) protein is Pyridoxine 5'-phosphate synthase.